A 191-amino-acid polypeptide reads, in one-letter code: Pyridoxal 5'-phosphate synthase subunit PdxT (191 aa).

46-48 (GES) contacts L-glutamine. The Nucleophile role is filled by Cys78. L-glutamine is bound by residues Arg105 and 134–135 (IR). Catalysis depends on charge relay system residues His170 and Glu172.

The protein belongs to the glutaminase PdxT/SNO family. In the presence of PdxS, forms a dodecamer of heterodimers. Only shows activity in the heterodimer.

It catalyses the reaction aldehydo-D-ribose 5-phosphate + D-glyceraldehyde 3-phosphate + L-glutamine = pyridoxal 5'-phosphate + L-glutamate + phosphate + 3 H2O + H(+). The catalysed reaction is L-glutamine + H2O = L-glutamate + NH4(+). The protein operates within cofactor biosynthesis; pyridoxal 5'-phosphate biosynthesis. Its function is as follows. Catalyzes the hydrolysis of glutamine to glutamate and ammonia as part of the biosynthesis of pyridoxal 5'-phosphate. The resulting ammonia molecule is channeled to the active site of PdxS. In Carboxydothermus hydrogenoformans (strain ATCC BAA-161 / DSM 6008 / Z-2901), this protein is Pyridoxal 5'-phosphate synthase subunit PdxT.